A 772-amino-acid chain; its full sequence is Nudix hydrolase 3 (772 aa).

A compositionally biased stretch (basic and acidic residues) spans 1 to 14 (MAEEHFDVLTKSGE). Residues 1-25 (MAEEHFDVLTKSGEKTGVSKPRGEV) form a disordered region. Positions 30–172 (DYHRAVHVWI…DPAYVPYDVN (143 aa)) constitute a Nudix hydrolase domain. The short motif at 69-90 (GHISAGDTSLLSAQRELEEELG) is the Nudix box element. The Mg(2+) site is built by glutamate 84 and glutamate 88.

The protein belongs to the Nudix hydrolase family. Mg(2+) serves as cofactor. Mn(2+) is required as a cofactor. In terms of tissue distribution, expressed in roots, stems and, at lower level, leaves.

In terms of biological role, probably mediates the hydrolysis of some nucleoside diphosphate derivatives. This chain is Nudix hydrolase 3 (NUDT3), found in Arabidopsis thaliana (Mouse-ear cress).